Here is a 71-residue protein sequence, read N- to C-terminus: Large ribosomal subunit protein uL29 (71 aa).

This sequence belongs to the universal ribosomal protein uL29 family.

This Rickettsia akari (strain Hartford) protein is Large ribosomal subunit protein uL29.